A 400-amino-acid chain; its full sequence is MRFVDEAVITVEAGDGGNGVASFRREKFVPFGGPDGGDGGRGGSVYIQADDDTGTLVDYRYTRKFRAERGKNGAGANCTGRGGEDVVLKVPVGTTIVDVESGDIIGDLVEDGQRVMVATGGDGGLGNTHFKSSTNRSPRKFTTGVKGEFREIRLELKVLADVGLLGMPNAGKSTFIRAVSAAKPKVADYPFTTMVPNLGVVDADRHRSFVMADIPGLIEGAAEGAGLGIRFLKHLARTRILLHIVDVQPIDGSDPVHNAKAIVGELKKFSPTLAELPVVLVLNKLDQIDEANREEWCQHILTELEWTGPVFRTSGLLLEGTKEVVYYLMDQIEQQRELEAEDPEYARKVKAFREQLEAETREQTIAAKEAYRAMRKAQREADQDDDFDDDDDEVEVIYVR.

Residues 1-159 (MRFVDEAVIT…REIRLELKVL (159 aa)) form the Obg domain. The OBG-type G domain occupies 160–333 (ADVGLLGMPN…VVYYLMDQIE (174 aa)). GTP-binding positions include 166–173 (GMPNAGKS), 191–195 (FTTMV), 213–216 (DIPG), 283–286 (NKLD), and 314–316 (SGL). Residues S173 and T193 each contribute to the Mg(2+) site.

It belongs to the TRAFAC class OBG-HflX-like GTPase superfamily. OBG GTPase family. As to quaternary structure, monomer. Mg(2+) is required as a cofactor.

The protein localises to the cytoplasm. Its function is as follows. An essential GTPase which binds GTP, GDP and possibly (p)ppGpp with moderate affinity, with high nucleotide exchange rates and a fairly low GTP hydrolysis rate. Plays a role in control of the cell cycle, stress response, ribosome biogenesis and in those bacteria that undergo differentiation, in morphogenesis control. This Acinetobacter baylyi (strain ATCC 33305 / BD413 / ADP1) protein is GTPase Obg.